The following is a 169-amino-acid chain: Ribosome maturation factor RimM (169 aa).

The PRC barrel domain occupies 97–169 (EDEYYWTDLV…IITADWGLDY (73 aa)).

This sequence belongs to the RimM family. Binds ribosomal protein uS19.

The protein localises to the cytoplasm. In terms of biological role, an accessory protein needed during the final step in the assembly of 30S ribosomal subunit, possibly for assembly of the head region. Essential for efficient processing of 16S rRNA. May be needed both before and after RbfA during the maturation of 16S rRNA. It has affinity for free ribosomal 30S subunits but not for 70S ribosomes. The chain is Ribosome maturation factor RimM from Neisseria meningitidis serogroup C / serotype 2a (strain ATCC 700532 / DSM 15464 / FAM18).